Here is a 535-residue protein sequence, read N- to C-terminus: Light-independent protochlorophyllide reductase subunit B (535 aa).

[4Fe-4S] cluster is bound at residue Asp36. The active-site Proton donor is the Asp287. 422–423 (GL) is a substrate binding site.

Belongs to the ChlB/BchB/BchZ family. In terms of assembly, protochlorophyllide reductase is composed of three subunits; BchL, BchN and BchB. Forms a heterotetramer of two BchB and two BchN subunits. [4Fe-4S] cluster is required as a cofactor.

It carries out the reaction chlorophyllide a + oxidized 2[4Fe-4S]-[ferredoxin] + 2 ADP + 2 phosphate = protochlorophyllide a + reduced 2[4Fe-4S]-[ferredoxin] + 2 ATP + 2 H2O. It functions in the pathway porphyrin-containing compound metabolism; bacteriochlorophyll biosynthesis (light-independent). In terms of biological role, component of the dark-operative protochlorophyllide reductase (DPOR) that uses Mg-ATP and reduced ferredoxin to reduce ring D of protochlorophyllide (Pchlide) to form chlorophyllide a (Chlide). This reaction is light-independent. The NB-protein (BchN-BchB) is the catalytic component of the complex. This Rhodopseudomonas palustris (strain BisB5) protein is Light-independent protochlorophyllide reductase subunit B.